The chain runs to 648 residues: Zinc finger protein 202 (648 aa).

Residue K22 forms a Glycyl lysine isopeptide (Lys-Gly) (interchain with G-Cter in SUMO2) linkage. The region spanning 46–127 (HQNFRRFRYQ…VTLVEGLQKQ (82 aa)) is the SCAN box domain. Residues 146–221 (SEETVHLGVE…PDLPAERSSG (76 aa)) form a disordered region. Positions 165–182 (PVQSSTPEQSPEETTQSP) are enriched in polar residues. The 72-residue stretch at 237-308 (VTFKDVAVCF…DIQEPQETQE (72 aa)) folds into the KRAB domain. C2H2-type zinc fingers lie at residues 397–419 (HDCS…LRTH) and 425–447 (YKCM…QKVH). Residues K454 and K460 each participate in a glycyl lysine isopeptide (Lys-Gly) (interchain with G-Cter in SUMO2) cross-link. The residue at position 466 (S466) is a Phosphoserine. The C2H2-type 3 zinc finger occupies 481 to 503 (YRCDDCGKHFRWTSDLVRHQRTH). Glycyl lysine isopeptide (Lys-Gly) (interchain with G-Cter in SUMO2) cross-links involve residues K507 and K521. 5 consecutive C2H2-type zinc fingers follow at residues 509-531 (FFCT…QRIH), 537-559 (YLCG…RKTH), 565-587 (YLCS…LRGH), 593-615 (CRCN…QRTH), and 621-643 (FTCP…QRTH).

In terms of assembly, interacts with SDP1. In terms of tissue distribution, highly expressed in testis. Also expressed in breast carcinoma cell lines.

Its subcellular location is the nucleus. Functionally, transcriptional repressor that binds to elements found predominantly in genes that participate in lipid metabolism. Among its targets are structural components of lipoprotein particles (apolipoproteins AIV, CIII, and E), enzymes involved in lipid processing (lipoprotein lipase, lecithin cholesteryl ester transferase), transporters involved in lipid homeostasis (ABCA1, ABCG1), and several genes involved in processes related to energy metabolism and vascular disease. This Homo sapiens (Human) protein is Zinc finger protein 202 (ZNF202).